A 323-amino-acid polypeptide reads, in one-letter code: Methenyltetrahydromethanopterin cyclohydrolase (323 aa).

The protein belongs to the MCH family. In terms of assembly, homodimer.

The protein localises to the cytoplasm. It carries out the reaction 5,10-methenyl-5,6,7,8-tetrahydromethanopterin + H2O = N(5)-formyl-5,6,7,8-tetrahydromethanopterin + H(+). It functions in the pathway one-carbon metabolism; formaldehyde degradation; formate from formaldehyde (H(4)MPT route): step 3/5. Its function is as follows. Catalyzes the hydrolysis of methenyl-H(4)MPT(+) to 5-formyl-H(4)MPT. The chain is Methenyltetrahydromethanopterin cyclohydrolase (mch) from Methylorubrum extorquens (strain ATCC 14718 / DSM 1338 / JCM 2805 / NCIMB 9133 / AM1) (Methylobacterium extorquens).